Consider the following 96-residue polypeptide: NADH-ubiquinone oxidoreductase chain 4L (96 aa).

The next 3 membrane-spanning stretches (helical) occupy residues 1–21, 24–44, and 57–77; these read MNPT…AFYQ, LLSL…LMAI, and LPLI…VLLV.

Belongs to the complex I subunit 4L family.

It is found in the mitochondrion membrane. The catalysed reaction is a ubiquinone + NADH + 5 H(+)(in) = a ubiquinol + NAD(+) + 4 H(+)(out). Core subunit of the mitochondrial membrane respiratory chain NADH dehydrogenase (Complex I) which catalyzes electron transfer from NADH through the respiratory chain, using ubiquinone as an electron acceptor. Part of the enzyme membrane arm which is embedded in the lipid bilayer and involved in proton translocation. The sequence is that of NADH-ubiquinone oxidoreductase chain 4L (MT-ND4L) from Myxine glutinosa (Atlantic hagfish).